A 592-amino-acid chain; its full sequence is MATCWQALWAYRSYLIVFFVPILLLPLPILVPSKEAYCAYAIILMALFWCTEALPLAVTALFPLILFPMMGIVDASEVAVEYLKDSNLLFFGGLLVAIAVEHWNLHKRIALRVLLIVGVRPAPLILGFMLVTAFLSMWISNTATSAMMVPIAHAVLDQLHSSQASSNVEEGSNNPTFELQEPSPQKEVTKLDNGQALPVTSASSEGRAHLSQKHLHLTQCMSLCVCYSASIGGIATLTGTAPNLVLQGQINSLFPQNGNVVNFASWFSFAFPTMVILLLLAWLWLQILFLGFNFRKNFGIGEKMQEQQQAAYCVIQTEHRLLGPMTFAEKAISILFVILVLLWFTREPGFFLGWGNLAFPNAKGESMVSDGTVAIFIGIIMFIIPSKFPGLTQDPENPGKLKAPLGLLDWKTVNQKMPWNIVLLLGGGYALAKGSERSGLSEWLGNKLTPLQSVPAPAIAIILSLLVATFTECTSNVATTTIFLPILASMAQAICLHPLYVMLPCTLATSLAFMLPVATPPNAIVFSFGDLKVLDMARAGFLLNIIGVLIIALAINSWGIPLFSLHSFPSWAQSNTTAQCLPSLANTTTPSP.

A run of 4 helical transmembrane segments spans residues 13–33 (SYLI…LVPS), 53–73 (ALPL…MGIV), 86–106 (SNLL…WNLH), and 114–134 (LLIV…VTAF). Polar residues predominate over residues 165–177 (SSNVEEGSNNPTF). The disordered stretch occupies residues 165-185 (SSNVEEGSNNPTFELQEPSPQ). 8 helical membrane passes run 221-241 (MSLC…TGTA), 274-294 (MVIL…GFNF), 324-344 (PMTF…LLWF), 371-391 (GTVA…FPGL), 450-470 (PLQS…VATF), 482-502 (IFLP…LYVM), 511-531 (LAFM…FGDL), and 545-565 (IIGV…LFSL).

The protein belongs to the SLC13A/DASS transporter (TC 2.A.47) family. NADC subfamily. As to expression, expressed in kidney and intestine. In kidney expressed in the proximal tubule (at protein level).

The protein localises to the apical cell membrane. The catalysed reaction is succinate(out) + 3 Na(+)(out) = succinate(in) + 3 Na(+)(in). The enzyme catalyses fumarate(out) + 3 Na(+)(out) = fumarate(in) + 3 Na(+)(in). It carries out the reaction 2-oxoglutarate(out) + 3 Na(+)(out) = 2-oxoglutarate(in) + 3 Na(+)(in). With respect to regulation, li(+) decreases succinate transport in the presence of Na(+), by competing at one of the three cation binding sites. Functionally, low-affinity sodium-dicarboxylate cotransporter, that mediates the entry of citric acid cycle intermediates, such as succinate, citrate, fumarate and alpha-ketoglutarate (2-oxoglutarate) into the small intestine and renal proximal tubule. Transports the dicarboxylate into the cell with a probable stoichiometry of 3 Na(+) for 1 divalent dicarboxylate, rendering the process electrogenic. Citrate is transported in protonated form as a divalent anion, rather than the trivalent form which is normally found in blood. Has a critical role in renal dicarboxylate transport. The chain is Solute carrier family 13 member 2 (SLC13A2) from Homo sapiens (Human).